Reading from the N-terminus, the 975-residue chain is Macrophage colony-stimulating factor 1 receptor 1 (975 aa).

An N-terminal signal peptide occupies residues 1–17 (MQSFLPLLMGIMASASS). Over 18–519 (VEWRHPVIWF…VEVSDKLFTS (502 aa)) the chain is Extracellular. 5 consecutive Ig-like C2-type domains span residues 34–113 (SSEV…VYVK), 125–208 (SLRV…INVI), 221–310 (MDEY…LLVV), 329–407 (GLSV…FHVK), and 404–513 (FHVK…VEVS). 3 cysteine pairs are disulfide-bonded: Cys49–Cys93, Cys140–Cys189, and Cys236–Cys292. Residues Asn156, Asn165, Asn246, Asn250, Asn289, Asn301, Asn399, Asn420, and Asn451 are each glycosylated (N-linked (GlcNAc...) asparagine). Cys426 and Cys495 are joined by a disulfide. Residues 520–540 (TLIGAAGVLAIFLLLLVFLLY) form a helical membrane-spanning segment. The Cytoplasmic segment spans residues 541–975 (KYKQKPRFEI…LMKTNNYQFC (435 aa)). Residues 544-576 (QKPRFEIRWKIIEAREGNNYTFIDPTQLPYNEK) are regulatory juxtamembrane domain. Tyr563 is modified (phosphotyrosine; by autocatalysis). The region spanning 584 to 918 (LKLGKVLGAG…MISQMINRLL (335 aa)) is the Protein kinase domain. Residues 590–598 (LGAGAFGKV) and Lys619 contribute to the ATP site. Residues Tyr702 and Tyr726 each carry the phosphotyrosine; by autocatalysis modification. Residue Asp782 is the Proton acceptor of the active site. Positions 800–822 (DFGLARDIMNDSNYVVKGNARLP) are activation loop. Phosphotyrosine; by autocatalysis occurs at positions 813 and 929. The disordered stretch occupies residues 939 to 963 (EGEACDEPKRYDPPCERSCDHEEEE). The span at 944-958 (DEPKRYDPPCERSCD) shows a compositional bias: basic and acidic residues. Residue Tyr972 is modified to Phosphotyrosine; by autocatalysis.

It belongs to the protein kinase superfamily. Tyr protein kinase family. CSF-1/PDGF receptor subfamily. In terms of assembly, monomer. Homodimer. Interacts with CSF1. Post-translationally, autophosphorylated in response to CSF1 binding. autophosphorylation, leading to its degradation. Ubiquitinated. Becomes rapidly polyubiquitinated after autophosphorylation, leading to its degradation.

The protein resides in the cell membrane. The catalysed reaction is L-tyrosyl-[protein] + ATP = O-phospho-L-tyrosyl-[protein] + ADP + H(+). With respect to regulation, present in an inactive conformation in the absence of bound ligand. CSF1 binding leads to dimerization and activation by autophosphorylation on tyrosine residues. In terms of biological role, tyrosine-protein kinase that acts as a cell-surface receptor for CSF1 and plays an essential role in the regulation of survival, proliferation and differentiation of hematopoietic precursor cells, especially mononuclear phagocytes, such as macrophages and monocytes. Plays an important role in innate immunity and in inflammatory processes. Plays an important role in the regulation of osteoclast proliferation and differentiation, the regulation of bone resorption, and is required for normal bone development. Promotes reorganization of the actin cytoskeleton, regulates formation of membrane ruffles, cell adhesion and cell migration. Activates several signaling pathways in response to ligand binding. This Takifugu rubripes (Japanese pufferfish) protein is Macrophage colony-stimulating factor 1 receptor 1 (csf1r1).